Reading from the N-terminus, the 376-residue chain is Small RNA 2'-O-methyltransferase (376 aa).

S-adenosyl-L-methionine is bound by residues T49, D67, and S103. Residues E121, E124, H125, and H171 each coordinate Mg(2+).

The protein belongs to the methyltransferase superfamily. HEN1 family. Requires Mg(2+) as cofactor.

The protein resides in the cytoplasm. It catalyses the reaction small RNA 3'-end nucleotide + S-adenosyl-L-methionine = small RNA 3'-end 2'-O-methylnucleotide + S-adenosyl-L-homocysteine + H(+). Methyltransferase that adds a 2'-O-methyl group at the 3'-end of piRNAs, a class of 24 to 30 nucleotide RNAs that are generated by a Dicer-independent mechanism and are primarily derived from transposons and other repeated sequence elements. This probably protects the 3'-end of piRNAs from uridylation activity and subsequent degradation. Stabilization of piRNAs is essential for gametogenesis. This chain is Small RNA 2'-O-methyltransferase (HENMT1), found in Gallus gallus (Chicken).